The chain runs to 425 residues: UDP-N-acetylglucosamine 1-carboxyvinyltransferase (425 aa).

Residue 23 to 24 (KN) coordinates phosphoenolpyruvate. Arginine 100 is a UDP-N-acetyl-alpha-D-glucosamine binding site. Cysteine 124 serves as the catalytic Proton donor. Position 124 is a 2-(S-cysteinyl)pyruvic acid O-phosphothioketal (cysteine 124). UDP-N-acetyl-alpha-D-glucosamine contacts are provided by aspartate 313 and isoleucine 335.

Belongs to the EPSP synthase family. MurA subfamily.

It localises to the cytoplasm. The enzyme catalyses phosphoenolpyruvate + UDP-N-acetyl-alpha-D-glucosamine = UDP-N-acetyl-3-O-(1-carboxyvinyl)-alpha-D-glucosamine + phosphate. It participates in cell wall biogenesis; peptidoglycan biosynthesis. Its function is as follows. Cell wall formation. Adds enolpyruvyl to UDP-N-acetylglucosamine. In Wolbachia sp. subsp. Drosophila simulans (strain wRi), this protein is UDP-N-acetylglucosamine 1-carboxyvinyltransferase.